We begin with the raw amino-acid sequence, 44 residues long: Homeobox protein DLX-1 (44 aa).

Residues 19–44 (RALSAGSPPVPPGWNRIPPLGRAQEE) are disordered.

This sequence belongs to the distal-less homeobox family. Interacts with SMAD4 (via homeobox DNA-binding domain). Interacts (via homeobox DNA-binding domain) with POU4F2; this interaction suppresses DLX1-mediated transcriptional activity in postnatal retina and enhances retinal ganglion cell (RGC) differentiation.

The protein resides in the nucleus. In terms of biological role, plays a role as a transcriptional activator or repressor. Inhibits several cytokine signaling pathways, such as TGFB1, activin-A/INHBA and BMP4 by interfering with the transcriptional stimulatory activity of transcription factors, such as MSX2, FAST2, SMAD2 and SMAD3 during hematopoietic cell differentiation. Plays a role in terminal differentiation of interneurons, such as amacrine and bipolar cells in the developing retina. Likely to play a regulatory role in the development of the ventral forebrain. May play a role in craniofacial patterning and morphogenesis and may be involved in the early development of diencephalic subdivisions. In Rattus norvegicus (Rat), this protein is Homeobox protein DLX-1 (Dlx1).